Consider the following 1401-residue polypeptide: DNA-directed RNA polymerase subunit beta'' (1401 aa).

Zn(2+) is bound by residues Cys-224, Cys-294, Cys-301, and Cys-304.

The protein belongs to the RNA polymerase beta' chain family. RpoC2 subfamily. In plastids the minimal PEP RNA polymerase catalytic core is composed of four subunits: alpha, beta, beta', and beta''. When a (nuclear-encoded) sigma factor is associated with the core the holoenzyme is formed, which can initiate transcription. The cofactor is Zn(2+).

The protein localises to the plastid. It is found in the chloroplast. It catalyses the reaction RNA(n) + a ribonucleoside 5'-triphosphate = RNA(n+1) + diphosphate. DNA-dependent RNA polymerase catalyzes the transcription of DNA into RNA using the four ribonucleoside triphosphates as substrates. The sequence is that of DNA-directed RNA polymerase subunit beta'' from Nymphaea alba (White water-lily).